The sequence spans 199 residues: MSESNHITWHDSEVTKKQRQHKNGHKSAVIWFTGLSGSGKSTVSVALEKELFNEGKQTYRLDGDNVRHGLNKNLGFSPEDRSENIRRIGEVAKLMVDAGALTVTAFISPYKEDREGVRALLEDNEFIEVYTKCSVEECEKRDPKGLYKKARSGEIPEFTGISAPYQAPENPEITIDTEHDTIEQSVEQIIRYLKEHEYI.

The interval 1 to 22 is disordered; it reads MSESNHITWHDSEVTKKQRQHK. ATP is bound at residue 34–41; it reads GLSGSGKS. Serine 108 (phosphoserine intermediate) is an active-site residue.

This sequence belongs to the APS kinase family.

It catalyses the reaction adenosine 5'-phosphosulfate + ATP = 3'-phosphoadenylyl sulfate + ADP + H(+). It functions in the pathway sulfur metabolism; hydrogen sulfide biosynthesis; sulfite from sulfate: step 2/3. Its function is as follows. Catalyzes the synthesis of activated sulfate. The protein is Adenylyl-sulfate kinase of Staphylococcus epidermidis (strain ATCC 12228 / FDA PCI 1200).